Here is a 576-residue protein sequence, read N- to C-terminus: Protein HYPER-SENSITIVITY-RELATED 4 (576 aa).

Residues 55 to 75 traverse the membrane as a helical segment; that stretch reads LATAKTVLTTAASVAATAMLA. Residue 306 to 313 coordinates ATP; it reads GPPGTGKS. The disordered stretch occupies residues 508 to 532; the sequence is DKAKTEKQELENKKKTKEGTDSVVK.

This sequence belongs to the AAA ATPase family. BCS1 subfamily. In terms of assembly, binds to the Yariv phenylglycoside (beta-D-Glc)(3). The cofactor is Mg(2+).

The protein localises to the membrane. It carries out the reaction ATP + H2O = ADP + phosphate + H(+). The sequence is that of Protein HYPER-SENSITIVITY-RELATED 4 from Arabidopsis thaliana (Mouse-ear cress).